Here is a 434-residue protein sequence, read N- to C-terminus: D-amino acid dehydrogenase (434 aa).

Residue Val3–Trp17 participates in FAD binding.

This sequence belongs to the DadA oxidoreductase family. FAD is required as a cofactor.

It carries out the reaction a D-alpha-amino acid + A + H2O = a 2-oxocarboxylate + AH2 + NH4(+). The protein operates within amino-acid degradation; D-alanine degradation; NH(3) and pyruvate from D-alanine: step 1/1. Oxidative deamination of D-amino acids. The protein is D-amino acid dehydrogenase of Serratia proteamaculans (strain 568).